A 351-amino-acid chain; its full sequence is Peptide chain release factor 1 (351 aa).

Glutamine 229 is modified (N5-methylglutamine). Positions 279–300 (ADAERAADRKSQVGSGDRSERI) are disordered.

It belongs to the prokaryotic/mitochondrial release factor family. Post-translationally, methylated by PrmC. Methylation increases the termination efficiency of RF1.

It is found in the cytoplasm. In terms of biological role, peptide chain release factor 1 directs the termination of translation in response to the peptide chain termination codons UAG and UAA. This is Peptide chain release factor 1 from Paracoccus denitrificans (strain Pd 1222).